A 215-amino-acid chain; its full sequence is MHDYQKAFIEFAIQREVLKFGQFTLKSGRSSPYFFNAGLFNTSTTLAQIGHFYAAALTSSPLQYDMLFGPAYKGIPLVSALAVTLANEKSMDVPYAFNRKEAKAHGEGGVIVGAPLKGKVLIVDDVITAGTAIREVISIIKANGAEPAGVLIALDRQERGQHQLSAIQEIEQNYQIPVTAIIQLDQILEFLKSDPHFSDNYKQVAEYRAVYGVQS.

K26 provides a ligand contact to 5-phospho-alpha-D-ribose 1-diphosphate. 34–35 (FF) lines the orotate pocket. 5-phospho-alpha-D-ribose 1-diphosphate contacts are provided by residues 72-73 (YK), R99, K100, K103, H105, and 124-132 (DDVITAGTA). Orotate contacts are provided by T128 and R156.

The protein belongs to the purine/pyrimidine phosphoribosyltransferase family. PyrE subfamily. In terms of assembly, homodimer. It depends on Mg(2+) as a cofactor.

The catalysed reaction is orotidine 5'-phosphate + diphosphate = orotate + 5-phospho-alpha-D-ribose 1-diphosphate. The protein operates within pyrimidine metabolism; UMP biosynthesis via de novo pathway; UMP from orotate: step 1/2. Catalyzes the transfer of a ribosyl phosphate group from 5-phosphoribose 1-diphosphate to orotate, leading to the formation of orotidine monophosphate (OMP). This chain is Orotate phosphoribosyltransferase, found in Hahella chejuensis (strain KCTC 2396).